Consider the following 506-residue polypeptide: Spindle pole body protein CSA6 (506 aa).

Disordered regions lie at residues 18–121, 252–276, 329–429, and 447–470; these read SPIK…PNEN, EKHN…VETQ, PSSP…YSIR, and KNDQ…EEKV. The segment covering 38-48 has biased composition (basic and acidic residues); sequence IDLRDYMDRQK. Residues 50 to 59 are compositionally biased toward polar residues; it reads SRNYSDSEYT. The segment covering 63 to 72 has biased composition (basic and acidic residues); that stretch reads IKREKPETKQ. The segment covering 94–119 has biased composition (polar residues); the sequence is PTKNYSQHVMQERSAPNSPQKKSLPN. Composition is skewed to polar residues over residues 330-353 and 361-389; these read SSPN…SVNL and QPSH…NPSP. 2 stretches are compositionally biased toward basic and acidic residues: residues 412-422 and 461-470; these read EWTREREERDG and TDGKEEEEKV.

It is found in the cytoplasm. The protein localises to the cytoskeleton. Its subcellular location is the microtubule organizing center. It localises to the spindle pole body. Its function is as follows. Plays a role in mitotic spindle pole body organization, possibly at the point of spindle pole body separation. Required for mitotic exit. The protein is Spindle pole body protein CSA6 of Candida tropicalis (strain ATCC MYA-3404 / T1) (Yeast).